The primary structure comprises 366 residues: Peptide chain release factor 2 (366 aa).

The residue at position 251 (Gln251) is an N5-methylglutamine.

Belongs to the prokaryotic/mitochondrial release factor family. Post-translationally, methylated by PrmC. Methylation increases the termination efficiency of RF2.

It is found in the cytoplasm. Its function is as follows. Peptide chain release factor 2 directs the termination of translation in response to the peptide chain termination codons UGA and UAA. This is Peptide chain release factor 2 (prfB) from Listeria monocytogenes serovar 1/2a (strain ATCC BAA-679 / EGD-e).